Here is a 258-residue protein sequence, read N- to C-terminus: Isoprenyl transferase (258 aa).

Asp38 is an active-site residue. Asp38 is a Mg(2+) binding site. Substrate-binding positions include 39–42 (GNGR), Trp43, Arg51, His55, and 83–85 (STE). Asn86 serves as the catalytic Proton acceptor. Substrate contacts are provided by residues Trp87, Arg89, Arg206, and 212–214 (RIS). Glu225 serves as a coordination point for Mg(2+).

The protein belongs to the UPP synthase family. Homodimer. Mg(2+) is required as a cofactor.

Its function is as follows. Catalyzes the condensation of isopentenyl diphosphate (IPP) with allylic pyrophosphates generating different type of terpenoids. The chain is Isoprenyl transferase from Bacillus anthracis.